The sequence spans 142 residues: Salivary protein 15b (142 aa).

The signal sequence occupies residues 1–20 (MKYLGLALISAVFLIGTCQA). Intrachain disulfides connect cysteine 27–cysteine 44, cysteine 40–cysteine 108, and cysteine 91–cysteine 117.

Belongs to the PBP/GOBP family. Female salivary gland.

The protein localises to the secreted. Functionally, inhibits contact coagulation pathway activation in the host by sequestering anionic polymers, such as dextran sulfate and heparin, and thus blocking interaction of protein components of the pathway with negatively charged surfaces. Inhibits dextran sulfate-mediated autoactivation of host coagulation factor XII (F12). Inhibits dextran sulfate-mediated activation of host factor XI (F11) by activated F12. Inhibits polyphosphate-induced plasma extravasation at the injection site in mouse model, probably via inhibition of bradykinin generation in host skin. The sequence is that of Salivary protein 15b from Phlebotomus duboscqi (Sandfly).